Here is a 119-residue protein sequence, read N- to C-terminus: Large ribosomal subunit protein bL20 (119 aa).

This sequence belongs to the bacterial ribosomal protein bL20 family.

In terms of biological role, binds directly to 23S ribosomal RNA and is necessary for the in vitro assembly process of the 50S ribosomal subunit. It is not involved in the protein synthesizing functions of that subunit. The protein is Large ribosomal subunit protein bL20 of Clostridium perfringens (strain ATCC 13124 / DSM 756 / JCM 1290 / NCIMB 6125 / NCTC 8237 / Type A).